We begin with the raw amino-acid sequence, 475 residues long: Probable GABA permease (475 aa).

Helical transmembrane passes span 27–47 (VTML…SGHA), 48–68 (IAAA…LVVL), 105–125 (LYWW…AAIL), 127–147 (AWFP…LLTV), 163–183 (FALL…VAIV), 211–231 (AVLG…IVTI), 250–270 (VIWR…SIVP), 296–316 (LIVD…AIYT), 345–365 (PAVL…YFAP), 368–388 (VFTF…LVIA), 413–433 (PWLT…MLIM), and 438–458 (HEVF…LLNA).

Belongs to the amino acid-polyamine-organocation (APC) superfamily. Amino acid transporter (AAT) (TC 2.A.3.1) family.

It is found in the membrane. In terms of biological role, involved in the degradation of beta-alanine. In Pseudomonas aeruginosa (strain ATCC 15692 / DSM 22644 / CIP 104116 / JCM 14847 / LMG 12228 / 1C / PRS 101 / PAO1), this protein is Probable GABA permease (bauD).